A 461-amino-acid chain; its full sequence is ADP-specific phosphofructokinase (461 aa).

In terms of domain architecture, ADPK spans 1–457 (MVRELLEKAR…FASYLAMLKE (457 aa)). Positions 268, 298, and 441 each coordinate Mg(2+). D441 acts as the Proton acceptor in catalysis.

Belongs to the carbohydrate kinase PfkC family. The cofactor is Mg(2+).

It is found in the cytoplasm. The enzyme catalyses beta-D-fructose 6-phosphate + ADP = beta-D-fructose 1,6-bisphosphate + AMP + H(+). It participates in carbohydrate degradation; glycolysis. Its function is as follows. Catalyzes the phosphorylation of fructose 6-phosphate to fructose 1,6-bisphosphate using ADP as the phosphate donor. This Thermococcus zilligii protein is ADP-specific phosphofructokinase.